We begin with the raw amino-acid sequence, 377 residues long: Succinyl-diaminopimelate desuccinylase (377 aa).

Histidine 67 serves as a coordination point for Zn(2+). Aspartate 69 is a catalytic residue. Position 100 (aspartate 100) interacts with Zn(2+). Glutamate 134 functions as the Proton acceptor in the catalytic mechanism. Zn(2+)-binding residues include glutamate 135, glutamate 163, and histidine 349.

This sequence belongs to the peptidase M20A family. DapE subfamily. In terms of assembly, homodimer. It depends on Zn(2+) as a cofactor. The cofactor is Co(2+).

It catalyses the reaction N-succinyl-(2S,6S)-2,6-diaminopimelate + H2O = (2S,6S)-2,6-diaminopimelate + succinate. Its pathway is amino-acid biosynthesis; L-lysine biosynthesis via DAP pathway; LL-2,6-diaminopimelate from (S)-tetrahydrodipicolinate (succinylase route): step 3/3. In terms of biological role, catalyzes the hydrolysis of N-succinyl-L,L-diaminopimelic acid (SDAP), forming succinate and LL-2,6-diaminopimelate (DAP), an intermediate involved in the bacterial biosynthesis of lysine and meso-diaminopimelic acid, an essential component of bacterial cell walls. This chain is Succinyl-diaminopimelate desuccinylase, found in Haemophilus influenzae (strain 86-028NP).